Here is a 500-residue protein sequence, read N- to C-terminus: NAD(P)H-quinone oxidoreductase chain 4, chloroplastic (500 aa).

14 helical membrane passes run 4-24, 35-55, 87-107, 134-154, 167-187, 208-228, 242-262, 272-292, 305-325, 330-350, 364-384, 386-406, 416-436, and 462-482; these read FPWLTLIVIFPISAGSFLFFL, YTLCVCSLELLLTTYTFCYHF, FGPILLTGFITTLATLAAWPV, LLLFFMMWELELIPVYLLLSM, FILYTAGSSIFLLIGVLGIGL, ALEIIFYIGFLIAFAVKSPII, HYSTCMLLAGILLKMGAYGLV, AHSIFAPYLIIVGAIQIVYAA, IAYSSVSHMGFIIIGIGSITD, GALLQIISHGFIGAALFFLAG, MGGMAVAIPKIFTMFSILSMA, LALPGMSGFVAELIVFFGIIT, ILITFVMAIGMILTPIYSLSM, and LFVSISILLPVIGMGIYPDFL.

The protein belongs to the complex I subunit 4 family.

It localises to the plastid. It is found in the chloroplast thylakoid membrane. It catalyses the reaction a plastoquinone + NADH + (n+1) H(+)(in) = a plastoquinol + NAD(+) + n H(+)(out). The enzyme catalyses a plastoquinone + NADPH + (n+1) H(+)(in) = a plastoquinol + NADP(+) + n H(+)(out). The sequence is that of NAD(P)H-quinone oxidoreductase chain 4, chloroplastic from Pelargonium hortorum (Common geranium).